We begin with the raw amino-acid sequence, 243 residues long: DNA repair protein RecO (243 aa).

It belongs to the RecO family.

Involved in DNA repair and RecF pathway recombination. The sequence is that of DNA repair protein RecO from Serratia proteamaculans (strain 568).